Consider the following 198-residue polypeptide: CASP-like protein 4B3 (198 aa).

The segment at 1–27 (MSSSGPPAGDGRDDASGPGPAGAAAAA) is disordered. The Cytoplasmic portion of the chain corresponds to 1-51 (MSSSGPPAGDGRDDASGPGPAGAAAAADGSVPVSRSIVERWKMEPAAARAR). Positions 16–27 (SGPGPAGAAAAA) are enriched in low complexity. The helical transmembrane segment at 52–72 (LLLRAVAWLFSLLALVVMASN) threads the bilayer. Residues 73 to 85 (KHGHGGAQDFDNY) lie on the Extracellular side of the membrane. Residues 86–106 (PEYTYCLGISIIAVLYTTAQV) form a helical membrane-spanning segment. Residues 107 to 124 (TRDVHRLSWGRDVIAGRK) lie on the Cytoplasmic side of the membrane. The chain crosses the membrane as a helical span at residues 125 to 145 (AAAVVDFAGDQVVAYLLMSAL). At 146–166 (SAAAPVTDYMRQAADNLFTDS) the chain is on the extracellular side. The helical transmembrane segment at 167–187 (AAAAISMAFLAFLAAGLSALV) threads the bilayer. At 188 to 198 (SGYNLAMEVLV) the chain is on the cytoplasmic side.

It belongs to the Casparian strip membrane proteins (CASP) family. Homodimer and heterodimers.

The protein resides in the cell membrane. In Oryza sativa subsp. japonica (Rice), this protein is CASP-like protein 4B3.